We begin with the raw amino-acid sequence, 128 residues long: Azurin (128 aa).

Residues 1-128 (AECKVTVDST…AMMKGTVTLK (128 aa)) form the Plastocyanin-like domain. Cysteine 3 and cysteine 26 are disulfide-bonded. Cu cation-binding residues include histidine 46, cysteine 112, histidine 117, and methionine 121.

Its subcellular location is the periplasm. Its function is as follows. Transfers electrons from cytochrome c551 to cytochrome oxidase. The chain is Azurin from Pseudomonas fluorescens biotype C.